Reading from the N-terminus, the 392-residue chain is Selenide, water dikinase 1 (392 aa).

Residue Cys31 is part of the active site. Residues Lys32, 67–69, Asp87, Asp110, and 161–164 each bind ATP; these read GMD and GGQT. Asp69 contributes to the Mg(2+) binding site. Asp110 contributes to the Mg(2+) binding site. Asp265 contributes to the Mg(2+) binding site.

The protein belongs to the selenophosphate synthase 1 family. Class II subfamily. Homodimer. Mg(2+) is required as a cofactor.

The protein resides in the cell membrane. It is found in the nucleus membrane. The enzyme catalyses hydrogenselenide + ATP + H2O = selenophosphate + AMP + phosphate + 2 H(+). Synthesizes selenophosphate from selenide and ATP. This Xenopus tropicalis (Western clawed frog) protein is Selenide, water dikinase 1 (sephs1).